The following is a 356-amino-acid chain: Protein U8 (356 aa).

It belongs to the herpesviridae US22 family.

In Homo sapiens (Human), this protein is Protein U8 (U8).